The chain runs to 244 residues: tRNA (guanine-N(7)-)-methyltransferase (244 aa).

The tract at residues 1–24 is disordered; the sequence is MTDSHVPHPESPAVEEGEERPHRR. The S-adenosyl-L-methionine site is built by glutamate 74, glutamate 99, aspartate 126, and aspartate 149. Aspartate 149 is a catalytic residue. Substrate is bound by residues lysine 153, aspartate 185, and 222–225; that span reads TKFE.

This sequence belongs to the class I-like SAM-binding methyltransferase superfamily. TrmB family.

The enzyme catalyses guanosine(46) in tRNA + S-adenosyl-L-methionine = N(7)-methylguanosine(46) in tRNA + S-adenosyl-L-homocysteine. The protein operates within tRNA modification; N(7)-methylguanine-tRNA biosynthesis. Its function is as follows. Catalyzes the formation of N(7)-methylguanine at position 46 (m7G46) in tRNA. The protein is tRNA (guanine-N(7)-)-methyltransferase of Pseudomonas syringae pv. syringae (strain B728a).